Consider the following 167-residue polypeptide: UPF0262 protein Nwi_0248 (167 aa).

Belongs to the UPF0262 family.

The sequence is that of UPF0262 protein Nwi_0248 from Nitrobacter winogradskyi (strain ATCC 25391 / DSM 10237 / CIP 104748 / NCIMB 11846 / Nb-255).